The sequence spans 402 residues: Phosphoglycerate kinase (402 aa).

Substrate-binding positions include 24–26, Arg-40, 63–66, Arg-122, and Arg-155; these read DFN and HFGR. ATP is bound by residues Lys-206, Gly-297, Glu-328, and 357-360; that span reads GGDS.

The protein belongs to the phosphoglycerate kinase family. As to quaternary structure, monomer.

The protein localises to the cytoplasm. The catalysed reaction is (2R)-3-phosphoglycerate + ATP = (2R)-3-phospho-glyceroyl phosphate + ADP. It participates in carbohydrate degradation; glycolysis; pyruvate from D-glyceraldehyde 3-phosphate: step 2/5. The chain is Phosphoglycerate kinase from Synechococcus sp. (strain ATCC 27144 / PCC 6301 / SAUG 1402/1) (Anacystis nidulans).